A 270-amino-acid chain; its full sequence is Putative phosphoenolpyruvate synthase regulatory protein (270 aa).

Glycine 150–threonine 157 serves as a coordination point for ADP.

It belongs to the pyruvate, phosphate/water dikinase regulatory protein family. PSRP subfamily.

The catalysed reaction is [pyruvate, water dikinase] + ADP = [pyruvate, water dikinase]-phosphate + AMP + H(+). It catalyses the reaction [pyruvate, water dikinase]-phosphate + phosphate + H(+) = [pyruvate, water dikinase] + diphosphate. In terms of biological role, bifunctional serine/threonine kinase and phosphorylase involved in the regulation of the phosphoenolpyruvate synthase (PEPS) by catalyzing its phosphorylation/dephosphorylation. The polypeptide is Putative phosphoenolpyruvate synthase regulatory protein (Shewanella loihica (strain ATCC BAA-1088 / PV-4)).